A 366-amino-acid chain; its full sequence is Chorismate synthase (366 aa).

NADP(+) is bound by residues Arg-48 and Arg-54. FMN is bound by residues 125 to 127 (RSS), 238 to 239 (NA), Gly-278, 293 to 297 (KPTSS), and Arg-319.

The protein belongs to the chorismate synthase family. Homotetramer. FMNH2 is required as a cofactor.

It carries out the reaction 5-O-(1-carboxyvinyl)-3-phosphoshikimate = chorismate + phosphate. It participates in metabolic intermediate biosynthesis; chorismate biosynthesis; chorismate from D-erythrose 4-phosphate and phosphoenolpyruvate: step 7/7. Functionally, catalyzes the anti-1,4-elimination of the C-3 phosphate and the C-6 proR hydrogen from 5-enolpyruvylshikimate-3-phosphate (EPSP) to yield chorismate, which is the branch point compound that serves as the starting substrate for the three terminal pathways of aromatic amino acid biosynthesis. This reaction introduces a second double bond into the aromatic ring system. This is Chorismate synthase from Neisseria meningitidis serogroup A / serotype 4A (strain DSM 15465 / Z2491).